The chain runs to 98 residues: Keratin, high sulfur matrix protein, IIIB3 (98 aa).

Ala-1 bears the N-acetylalanine mark.

Belongs to the KRTAP type 3 family. In terms of assembly, interacts with wool keratins. As to expression, wool.

Its function is as follows. In the wool cortex, wool keratin intermediate filaments are embedded in an interfilamentous matrix, consisting of hair keratin-associated proteins (KRTAP), which are essential for the formation of a rigid and resistant wool shaft through their extensive disulfide bond cross-linking with abundant cysteine residues of wool keratins. The matrix proteins include the high-sulfur and high-glycine-tyrosine keratins. The polypeptide is Keratin, high sulfur matrix protein, IIIB3 (Ovis aries (Sheep)).